A 112-amino-acid polypeptide reads, in one-letter code: Phosphoribosyl-ATP pyrophosphatase (112 aa).

It belongs to the PRA-PH family.

It localises to the cytoplasm. The catalysed reaction is 1-(5-phospho-beta-D-ribosyl)-ATP + H2O = 1-(5-phospho-beta-D-ribosyl)-5'-AMP + diphosphate + H(+). Its pathway is amino-acid biosynthesis; L-histidine biosynthesis; L-histidine from 5-phospho-alpha-D-ribose 1-diphosphate: step 2/9. This Chromohalobacter salexigens (strain ATCC BAA-138 / DSM 3043 / CIP 106854 / NCIMB 13768 / 1H11) protein is Phosphoribosyl-ATP pyrophosphatase.